Consider the following 576-residue polypeptide: Putative export ATP-binding/permease protein RT0691 (576 aa).

One can recognise an ABC transmembrane type-1 domain in the interval 20–303 (LIIVMISLLS…IFELLSEIHL (284 aa)). A run of 6 helical transmembrane segments spans residues 21–41 (IIVM…GSVF), 61–81 (ILYI…RSYF), 135–155 (FLSF…LMFF), 158–178 (FKLA…LIKF), 242–262 (ALFF…IVWI), and 277–297 (IISF…IFEL). Residues 336 to 572 (IEFKNVDFTY…SEIYRNICRE (237 aa)) form the ABC transporter domain. 371–378 (GRSGAGKS) is an ATP binding site.

This sequence belongs to the ABC transporter superfamily. As to quaternary structure, homodimer.

It localises to the cell inner membrane. Its function is as follows. Part of an ABC transporter complex. Transmembrane domains (TMD) form a pore in the inner membrane and the ATP-binding domain (NBD) is responsible for energy generation. This chain is Putative export ATP-binding/permease protein RT0691, found in Rickettsia typhi (strain ATCC VR-144 / Wilmington).